A 192-amino-acid chain; its full sequence is dITP/XTP pyrophosphatase (192 aa).

Residue 12 to 17 (TNNENK) participates in substrate binding. Mg(2+)-binding residues include Glu-41 and Asp-70. The Proton acceptor role is filled by Asp-70. Residues Ser-71, 145–148 (FGFD), Lys-168, and 173–174 (HR) contribute to the substrate site.

The protein belongs to the HAM1 NTPase family. Homodimer. Requires Mg(2+) as cofactor.

The catalysed reaction is XTP + H2O = XMP + diphosphate + H(+). The enzyme catalyses dITP + H2O = dIMP + diphosphate + H(+). It carries out the reaction ITP + H2O = IMP + diphosphate + H(+). In terms of biological role, pyrophosphatase that catalyzes the hydrolysis of nucleoside triphosphates to their monophosphate derivatives, with a high preference for the non-canonical purine nucleotides XTP (xanthosine triphosphate), dITP (deoxyinosine triphosphate) and ITP. Seems to function as a house-cleaning enzyme that removes non-canonical purine nucleotides from the nucleotide pool, thus preventing their incorporation into DNA/RNA and avoiding chromosomal lesions. In Saccharolobus solfataricus (strain ATCC 35092 / DSM 1617 / JCM 11322 / P2) (Sulfolobus solfataricus), this protein is dITP/XTP pyrophosphatase.